Consider the following 476-residue polypeptide: Cytosolic iron-sulfur assembly component 3 (476 aa).

Ala2 is subject to N-acetylalanine. [4Fe-4S] cluster contacts are provided by Cys24, Cys71, Cys74, Cys77, Cys190, Cys246, Cys395, and Cys399.

The protein belongs to the NARF family. External component of the CIA complex. In the CIA complex, interacts directly with CIAO1 and MMS19.

In terms of biological role, component of the cytosolic iron-sulfur protein assembly (CIA) complex, a multiprotein complex that mediates the incorporation of iron-sulfur cluster into extramitochondrial Fe/S proteins. Seems to negatively regulate the level of HIF1A expression, although this effect could be indirect. In Bos taurus (Bovine), this protein is Cytosolic iron-sulfur assembly component 3.